The primary structure comprises 308 residues: Glutaminase (308 aa).

Substrate is bound by residues Ser66, Asn117, Glu161, Asn168, Tyr192, Tyr244, and Val262.

Belongs to the glutaminase family. Homotetramer.

The catalysed reaction is L-glutamine + H2O = L-glutamate + NH4(+). This is Glutaminase from Klebsiella pneumoniae (strain 342).